The primary structure comprises 392 residues: L-lactate dehydrogenase (392 aa).

Positions 1-380 (MIISASTDYR…GSDSLVTGSA (380 aa)) constitute an FMN hydroxy acid dehydrogenase domain. A substrate-binding site is contributed by tyrosine 24. Positions 106 and 127 each coordinate FMN. A substrate-binding site is contributed by tyrosine 129. FMN is bound at residue threonine 155. Arginine 164 lines the substrate pocket. Position 251 (lysine 251) interacts with FMN. The active-site Proton acceptor is histidine 275. Residue arginine 278 participates in substrate binding. 306-330 (DSGVRNGLDVVRMIAMGADTILLGR) serves as a coordination point for FMN.

This sequence belongs to the FMN-dependent alpha-hydroxy acid dehydrogenase family. It depends on FMN as a cofactor.

It is found in the cell inner membrane. The enzyme catalyses (S)-lactate + A = pyruvate + AH2. In terms of biological role, catalyzes the conversion of L-lactate to pyruvate. Is coupled to the respiratory chain. The protein is L-lactate dehydrogenase of Chromohalobacter salexigens (strain ATCC BAA-138 / DSM 3043 / CIP 106854 / NCIMB 13768 / 1H11).